A 138-amino-acid chain; its full sequence is UPF0355 protein SSP2326 (138 aa).

Positions 115–138 are disordered; the sequence is NVAFETNQTKSNSHYSEETNGPKS. Positions 118-138 are enriched in polar residues; it reads FETNQTKSNSHYSEETNGPKS.

Belongs to the UPF0355 family.

The chain is UPF0355 protein SSP2326 from Staphylococcus saprophyticus subsp. saprophyticus (strain ATCC 15305 / DSM 20229 / NCIMB 8711 / NCTC 7292 / S-41).